Reading from the N-terminus, the 1096-residue chain is Carbamoyl phosphate synthase large chain (1096 aa).

The interval M1–E402 is carboxyphosphate synthetic domain. ATP-binding residues include R129, R169, G175, G176, E208, I210, E215, G241, V242, H243, Q285, and E299. The ATP-grasp 1 domain maps to K133 to I328. 3 residues coordinate Mg(2+): Q285, E299, and N301. Mn(2+)-binding residues include Q285, E299, and N301. Residues K403 to I547 are oligomerization domain. Positions V548–F950 are carbamoyl phosphate synthetic domain. Residues S676 to V870 enclose the ATP-grasp 2 domain. 10 residues coordinate ATP: R712, R754, L756, E761, G786, I787, H788, S789, Q829, and E841. The Mg(2+) site is built by Q829, E841, and N843. Mn(2+)-binding residues include Q829, E841, and N843. The 145-residue stretch at G951 to R1095 folds into the MGS-like domain. The allosteric domain stretch occupies residues G951–R1096.

This sequence belongs to the CarB family. In terms of assembly, composed of two chains; the small (or glutamine) chain promotes the hydrolysis of glutamine to ammonia, which is used by the large (or ammonia) chain to synthesize carbamoyl phosphate. Tetramer of heterodimers (alpha,beta)4. Requires Mg(2+) as cofactor. Mn(2+) serves as cofactor.

The catalysed reaction is hydrogencarbonate + L-glutamine + 2 ATP + H2O = carbamoyl phosphate + L-glutamate + 2 ADP + phosphate + 2 H(+). It catalyses the reaction hydrogencarbonate + NH4(+) + 2 ATP = carbamoyl phosphate + 2 ADP + phosphate + 2 H(+). Its pathway is amino-acid biosynthesis; L-arginine biosynthesis; carbamoyl phosphate from bicarbonate: step 1/1. The protein operates within pyrimidine metabolism; UMP biosynthesis via de novo pathway; (S)-dihydroorotate from bicarbonate: step 1/3. Functionally, large subunit of the glutamine-dependent carbamoyl phosphate synthetase (CPSase). CPSase catalyzes the formation of carbamoyl phosphate from the ammonia moiety of glutamine, carbonate, and phosphate donated by ATP, constituting the first step of 2 biosynthetic pathways, one leading to arginine and/or urea and the other to pyrimidine nucleotides. The large subunit (synthetase) binds the substrates ammonia (free or transferred from glutamine from the small subunit), hydrogencarbonate and ATP and carries out an ATP-coupled ligase reaction, activating hydrogencarbonate by forming carboxy phosphate which reacts with ammonia to form carbamoyl phosphate. This Clavibacter sepedonicus (Clavibacter michiganensis subsp. sepedonicus) protein is Carbamoyl phosphate synthase large chain.